Consider the following 155-residue polypeptide: Nucleoside diphosphate kinase, cytosolic (155 aa).

The ATP site is built by K16, F64, R92, T98, R109, and N119. Catalysis depends on H122, which acts as the Pros-phosphohistidine intermediate.

This sequence belongs to the NDK family. As to quaternary structure, homohexamer. Mg(2+) is required as a cofactor.

The protein localises to the cytoplasm. It carries out the reaction a 2'-deoxyribonucleoside 5'-diphosphate + ATP = a 2'-deoxyribonucleoside 5'-triphosphate + ADP. It catalyses the reaction a ribonucleoside 5'-diphosphate + ATP = a ribonucleoside 5'-triphosphate + ADP. In terms of biological role, major role in the synthesis of nucleoside triphosphates other than ATP. This is Nucleoside diphosphate kinase, cytosolic (ndkC-1) from Dictyostelium discoideum (Social amoeba).